The sequence spans 96 residues: Small ribosomal subunit protein bS6 (96 aa).

The protein belongs to the bacterial ribosomal protein bS6 family.

In terms of biological role, binds together with bS18 to 16S ribosomal RNA. The sequence is that of Small ribosomal subunit protein bS6 from Salinispora arenicola (strain CNS-205).